Consider the following 588-residue polypeptide: Adenine deaminase (588 aa).

This sequence belongs to the metallo-dependent hydrolases superfamily. Adenine deaminase family. In terms of assembly, homodimer. It depends on Mn(2+) as a cofactor.

It carries out the reaction adenine + H2O + H(+) = hypoxanthine + NH4(+). In Escherichia coli (strain SMS-3-5 / SECEC), this protein is Adenine deaminase.